A 457-amino-acid chain; its full sequence is MSTVSDPNSSNPPESAGNIRPEPIFREINAEQTDEIVEVESACMNCFETGVTRLLPTKIPFFREVVLMSFKCDHCGHINNEMQSASEIQKSGIRIELRVQSVADLNRRVVRSDNSSISIPEIELEIPVQSQKGEVTTVEGIIERTIAGLSQDQEKRRIDHPETAASIEKYIERLHRLKEVTTPFQVLLEDISGNSFIENPLAPAADPQLKTSYFTRSQQQNEQLGLYEQNHEEQHLLKPIAEDSWPIENLHGEVLQFPTNCPSCQAPCETNMKLTNIPHFKEVVIMATVCGACGHKTNEVKSGGGVEAQGVRFRVQIASREDLTRDVLKSETCSMSIPELDLEVGPHALCGRFTTVEGLLVAMRDQLDGTLFHDSADDATKQQMQRFLDTFEDVMNLKRVITLVLEDPAGNTYVQSLSDDDSEPDDKLTVERYDRSYEDNEDLGLNDMKTEGYEEKA.

A compositionally biased stretch (polar residues) spans 1-13 (MSTVSDPNSSNPP). Residues 1-21 (MSTVSDPNSSNPPESAGNIRP) are disordered. 2 consecutive C4-type zinc fingers follow at residues 43–75 (CMNC…CDHC) and 261–293 (CPSC…CGAC). A disordered region spans residues 414 to 457 (VQSLSDDDSEPDDKLTVERYDRSYEDNEDLGLNDMKTEGYEEKA). Basic and acidic residues-rich tracts occupy residues 425–438 (DDKL…RSYE) and 448–457 (MKTEGYEEKA).

The protein belongs to the ZPR1 family.

Its function is as follows. Might mediate EGFR and FGFR signal transduction cascades required for lumen formation in tracheal cells. This chain is Zinc finger protein ZPR1, found in Drosophila melanogaster (Fruit fly).